The primary structure comprises 271 residues: Intercellular adhesion molecule 4 (271 aa).

Residues 1–22 form the signal peptide; sequence MGSLFPLSLLFFLAAAYPGVGS. The Extracellular portion of the chain corresponds to 23–240; the sequence is ALGRRTKRAQ…MLAWSPAPTA (218 aa). 2 Ig-like C2-type domains span residues 62–124 and 146–217; these read GKSV…TRWA and GRKY…LNLD. N-linked (GlcNAc...) asparagine glycans are attached at residues Asn68, Asn78, Asn190, and Asn223. 4 disulfides stabilise this stretch: Cys69–Cys113, Cys69–Cys117, Cys73–Cys117, and Cys153–Cys210. The helical transmembrane segment at 241–261 threads the bilayer; the sequence is LASGSIAALVGILLTVGAAYL. Topologically, residues 262-271 are cytoplasmic; it reads CKCLAMKSQA.

It belongs to the immunoglobulin superfamily. ICAM family. N- and O-glycosylated. In terms of tissue distribution, erythrocytes.

It is found in the cell membrane. The protein localises to the secreted. ICAM proteins are ligands for the leukocyte adhesion protein LFA-1 (integrin alpha-L/beta-2). ICAM4 is also a ligand for alpha-4/beta-1 and alpha-V integrins. In Homo sapiens (Human), this protein is Intercellular adhesion molecule 4 (ICAM4).